The sequence spans 352 residues: (2E,6E)-farnesyl diphosphate synthase (352 aa).

Isopentenyl diphosphate contacts are provided by K43, R46, and H77. Mg(2+) is bound by residues D84 and D88. The short motif at 84–88 (DDLID) is the DDXXD motif element. Position 94 (R94) interacts with isopentenyl diphosphate. A DDXXD motif motif is present at residues 236 to 240 (DDVLG).

The protein belongs to the FPP/GGPP synthase family. Mg(2+) is required as a cofactor.

The enzyme catalyses isopentenyl diphosphate + dimethylallyl diphosphate = (2E)-geranyl diphosphate + diphosphate. It catalyses the reaction isopentenyl diphosphate + (2E)-geranyl diphosphate = (2E,6E)-farnesyl diphosphate + diphosphate. It participates in isoprenoid biosynthesis; geranyl diphosphate biosynthesis; geranyl diphosphate from dimethylallyl diphosphate and isopentenyl diphosphate: step 1/1. Its pathway is isoprenoid biosynthesis; farnesyl diphosphate biosynthesis; farnesyl diphosphate from geranyl diphosphate and isopentenyl diphosphate. Functionally, catalyzes the sequential condensations of isopentenyl pyrophosphate (IPP) with dimethylallyl diphosphate (DMAPP) to yield geranyl diphosphate (GPP) and with GPP to yield (2E,6E)-farnesyl diphosphate (E,E-FPP). In Mycobacterium tuberculosis (strain ATCC 25618 / H37Rv), this protein is (2E,6E)-farnesyl diphosphate synthase.